The following is a 317-amino-acid chain: Olfactory receptor 5AP2 (317 aa).

The Extracellular portion of the chain corresponds to 1 to 32; the sequence is MVRSGKGIQNKNATEVTEFILLGLSDNPDLQG. The N-linked (GlcNAc...) asparagine glycan is linked to N12. A helical membrane pass occupies residues 33–53; it reads VLFALFLIIYTMTLVGNLGMM. Residues 54–61 lie on the Cytoplasmic side of the membrane; it reads ALIKIDRS. A helical membrane pass occupies residues 62-82; it reads LHTPMYFFLSSLSFVDASYSS. Over 83–106 the chain is Extracellular; it reads SVTPKMLVNLMAEDKSISFNGCAT. A disulfide bridge links C104 with C196. Residues 107 to 127 form a helical membrane-spanning segment; that stretch reads QFFFFGSFLGTECFLLAMMAY. Topologically, residues 128 to 140 are cytoplasmic; it reads DRYAAIWNPLLYP. Residues 141–161 traverse the membrane as a helical segment; it reads VLMSGRICFMLVSTSFLAGFG. Topologically, residues 162 to 203 are extracellular; that stretch reads NAAIHTGMTFRLSFCGSNKINHFYCDTPPLLKLSCSDTHING. The helical transmembrane segment at 204 to 224 threads the bilayer; the sequence is IVIMAFSSFNVISCVLIVLIS. Over 225–244 the chain is Cytoplasmic; the sequence is YLCILIAILKMPSAEGRHKA. Residues 245–265 traverse the membrane as a helical segment; it reads FSTCASHLMAVTIFFGTILFM. Over 266-278 the chain is Extracellular; that stretch reads YLRPTSSYSMEQD. A helical transmembrane segment spans residues 279-299; sequence KVVSVFYTVVIPMLNPLIYSL. The Cytoplasmic segment spans residues 300–317; the sequence is KNKDVKKAVKKILHNYVV.

Belongs to the G-protein coupled receptor 1 family.

It is found in the cell membrane. Functionally, odorant receptor. In Mus musculus (Mouse), this protein is Olfactory receptor 5AP2.